A 240-amino-acid polypeptide reads, in one-letter code: Uridylate kinase (240 aa).

An ATP-binding site is contributed by 12 to 15 (KLSG). The involved in allosteric activation by GTP stretch occupies residues 20–25 (GSQGFG). Glycine 54 is a UMP binding site. Glycine 55 and arginine 59 together coordinate ATP. UMP-binding positions include aspartate 74 and 135–142 (TGNPYFST). ATP-binding residues include tyrosine 168 and aspartate 171.

It belongs to the UMP kinase family. As to quaternary structure, homohexamer.

The protein localises to the cytoplasm. It catalyses the reaction UMP + ATP = UDP + ADP. It participates in pyrimidine metabolism; CTP biosynthesis via de novo pathway; UDP from UMP (UMPK route): step 1/1. Allosterically activated by GTP. Inhibited by UTP. Functionally, catalyzes the reversible phosphorylation of UMP to UDP. The chain is Uridylate kinase from Desulfitobacterium hafniense (strain Y51).